The following is a 412-amino-acid chain: 3,4-dihydroxybenzoate--[aryl-carrier protein] ligase (412 aa).

This sequence belongs to the ATP-dependent AMP-binding enzyme family.

It carries out the reaction holo-[aryl-carrier protein] + 3,4-dihydroxybenzoate + ATP = 3,4-dihydroxybenzoyl-[aryl-carrier protein] + AMP + diphosphate. The enzyme catalyses 3,4-dihydroxybenzoate + ATP + H(+) = 3,4-dihydroxybenzoyl-5'-AMP + diphosphate. It catalyses the reaction 3,4-dihydroxybenzoyl-5'-AMP + holo-[aryl-carrier protein] = 3,4-dihydroxybenzoyl-[aryl-carrier protein] + AMP + H(+). Its pathway is siderophore biosynthesis; petrobactin biosynthesis. With respect to regulation, ATP-pyrophosphate exchange is inhibited in vitro by nonhydrolyzable acylsulfamate analogs that mimic the AsbC-bound intermediate 3,4-dihydroxybenzoyl-AMP. Involved in the biosynthesis of petrobactin, a catecholate siderophore that functions in both iron acquisition and virulence. Catalyzes the adenylation of 3,4-dihydroxybenzoate (3,4-DHBA) to the corresponding AMP ester, followed by the transfer of the activated unit to the phosphopantetheine thiol of the aryl-carrier protein AsbD. The sequence is that of 3,4-dihydroxybenzoate--[aryl-carrier protein] ligase from Bacillus anthracis.